The primary structure comprises 635 residues: Biosynthetic arginine decarboxylase (635 aa).

K103 carries the post-translational modification N6-(pyridoxal phosphate)lysine. Residue 283 to 293 (FDVGGGLGVDY) participates in substrate binding.

It belongs to the Orn/Lys/Arg decarboxylase class-II family. SpeA subfamily. Mg(2+) is required as a cofactor. Requires pyridoxal 5'-phosphate as cofactor.

It carries out the reaction L-arginine + H(+) = agmatine + CO2. It participates in amine and polyamine biosynthesis; agmatine biosynthesis; agmatine from L-arginine: step 1/1. Its function is as follows. Catalyzes the biosynthesis of agmatine from arginine. The chain is Biosynthetic arginine decarboxylase from Proteus mirabilis (strain HI4320).